The chain runs to 342 residues: Alpha-(1,3)-fucosyltransferase 7 (342 aa).

Topologically, residues Met-1–Ser-11 are cytoplasmic. A helical; Signal-anchor for type II membrane protein transmembrane segment spans residues Leu-12–Trp-31. Residues Arg-32–Ala-342 are Extracellular-facing. A disulfide bond links Cys-68 and Cys-76. An N-linked (GlcNAc...) asparagine glycan is attached at Asn-81. An intrachain disulfide couples Cys-211 to Cys-214. N-linked (GlcNAc...) asparagine glycosylation is present at Asn-291. Residues Cys-318 and Cys-321 are joined by a disulfide bond.

This sequence belongs to the glycosyltransferase 10 family. In terms of processing, N-glycosylated. As to expression, expressed in thymus, spleen, liver and lung. Highly expressed in the thymus and lower expressed in the lung.

The protein localises to the membrane. It carries out the reaction an N-acetyl-alpha-neuraminyl-(2-&gt;3)-beta-D-galactosyl-(1-&gt;4)-N-acetyl-beta-D-glucosaminyl derivative + GDP-beta-L-fucose = an alpha-Neu5Ac-(2-&gt;3)-beta-D-Gal-(1-&gt;4)-[alpha-L-Fuc-(1-&gt;3)]-beta-D-GlcNAc derivative + GDP + H(+). It catalyses the reaction a neolactoside IV(3)-alpha-NeuAc-nLc4Cer + GDP-beta-L-fucose = a neolactoside IV(3)-alpha-NeuNAc,III(3)-alpha-Fuc-nLc4Cer + GDP + H(+). The enzyme catalyses a neolactoside VI(3)-alpha-NeuNAc-nLc6Cer + GDP-beta-L-fucose = a neolactoside VI(3)-alpha-NeuAc,V(3)-alphaFuc-nLc6Cer + GDP + H(+). The catalysed reaction is an alpha-Neu5Ac-(2-&gt;3)-beta-D-Gal-(1-&gt;4)-beta-D-GlcNAc-(1-&gt;3)-beta-D-Gal-(1-&gt;4)-[alpha-L-Fuc-(1-&gt;3)]-beta-D-GlcNAc derivative + GDP-beta-L-fucose = an alpha-Neu5Ac-(2-&gt;3)-beta-D-Gal-(1-&gt;4)-[alpha-L-Fuc-(1-&gt;3)]-beta-D-GlcNAc-(1-&gt;3)-beta-D-Gal-(1-&gt;4)-[alpha-L-Fuc-(1-&gt;3)]-beta-D-GlcNAc derivative + GDP + H(+). It carries out the reaction an alpha-Neu5Ac-(2-&gt;3)-beta-D-Gal-(1-&gt;4)-beta-D-GlcNAc6S derivative + GDP-beta-L-fucose = an alpha-Neu5Ac-(2-&gt;3)-beta-D-Gal-(1-&gt;4)-[alpha-L-Fuc-(1-&gt;3)]-beta-D-GlcNAc6S derivative + GDP + H(+). It catalyses the reaction alpha-Neu5Ac-(2-&gt;3)-beta-D-Gal-(1-&gt;4)-beta-D-GlcNAc-(1-&gt;3)-beta-D-Gal-(1-&gt;4)-D-Glc + GDP-beta-L-fucose = alpha-Neu5Ac-(2-&gt;3)-beta-D-Gal-(1-&gt;4)-[alpha-L-Fuc-(1-&gt;3)]-beta-D-GlcNAc-(1-&gt;3)-beta-D-Gal-(1-&gt;4)-D-Glc + GDP + H(+). The enzyme catalyses alpha-Neu5Ac-(2-&gt;3)-beta-D-Gal-(1-&gt;4)-beta-D-GlcNAc-(1-&gt;3)-beta-D-Gal-(1-&gt;4)-[alpha-L-Fuc-(1-&gt;3)]-beta-D-GlcNAc-(1-&gt;3)-beta-D-Gal-(1-&gt;4)-beta-D-GlcNAc + GDP-beta-L-fucose = alpha-Neu5Ac-(2-&gt;3)-beta-D-Gal-(1-&gt;4)-[alpha-L-Fuc-(1-&gt;3)]-beta-D-GlcNAc-(1-&gt;3)-beta-D-Gal-(1-&gt;4)-[alpha-L-Fuc-(1-&gt;3)]-beta-D-GlcNAc-(1-&gt;3)-beta-D-Gal-(1-&gt;4)-beta-D-GlcNAc + GDP + H(+). The catalysed reaction is alpha-Neu5Ac-(2-&gt;3)-beta-D-Gal-(1-&gt;4)-beta-D-GlcNAc-(1-&gt;3)-beta-D-Gal-(1-&gt;4)-beta-D-GlcNAc-(1-&gt;3)-beta-D-Gal-(1-&gt;4)-beta-D-GlcNAc + GDP-beta-L-fucose = alpha-Neu5Ac-(2-&gt;3)-beta-D-Gal-(1-&gt;4)-[alpha-L-Fuc-(1-&gt;3)]-beta-D-GlcNAc-(1-&gt;3)-beta-D-Gal-(1-&gt;4)-beta-D-GlcNAc-(1-&gt;3)-beta-D-Gal-(1-&gt;4)-beta-D-GlcNAc + GDP + H(+). It participates in protein modification; protein glycosylation. Its activity is regulated as follows. Inhibited by NaCl. Inhibited by GDP in a concentration dependent manner, with an IC(50) value of 93 uM. Also inhibited by GMP and GTP. Inhibited by N-ethylmaleimide. Activated by poly(ethylene glycol) by enhancing the thermal stability of FUT7. Activated by Mn2+, Ca2+, and Mg2+. Both panosialin A and B inhibit activity with IC(50) values of 4.8 and 5.3 ug/ml, respectively. Inhibited by gallic acid (GA) and (-)-epigallocatechin gallate (EGCG) in a time-dependent and irreversible manner with IC(50) values of 60 and 700 nM, respectively. Catalyzes the transfer of L-fucose, from a guanosine diphosphate-beta-L-fucose, to the N-acetyl glucosamine (GlcNAc) of a distal alpha2,3 sialylated lactosamine unit of a glycoprotein or a glycolipid-linked sialopolylactosamines chain through an alpha-1,3 glycosidic linkage and participates in the final fucosylation step in the biosynthesis of the sialyl Lewis X (sLe(x)), a carbohydrate involved in cell and matrix adhesion during leukocyte trafficking and fertilization. In vitro, also synthesizes sialyl-dimeric-Lex structures, from VIM-2 structures and both di-fucosylated and trifucosylated structures from mono-fucosylated precursors. However does not catalyze alpha 1-3 fucosylation when an internal alpha 1-3 fucosylation is present in polylactosamine chain and the fucosylation rate of the internal GlcNAc residues is reduced once fucose has been added to the distal GlcNAc. Also catalyzes the transfer of a fucose from GDP-beta-fucose to the 6-sulfated a(2,3)sialylated substrate to produce 6-sulfo sLex mediating significant L-selectin-dependent cell adhesion. Through sialyl-Lewis(x) biosynthesis, can control SELE- and SELP-mediated cell adhesion with leukocytes and allows leukocytes tethering and rolling along the endothelial tissue thereby enabling the leukocytes to accumulate at a site of inflammation. May enhance embryo implantation through sialyl Lewis X (sLeX)-mediated adhesion of embryo cells to endometrium. May affect insulin signaling by up-regulating the phosphorylation and expression of some signaling molecules involved in the insulin-signaling pathway through SLe(x) which is present on the glycans of the INSRR alpha subunit. The sequence is that of Alpha-(1,3)-fucosyltransferase 7 from Bos taurus (Bovine).